A 401-amino-acid chain; its full sequence is S-adenosylmethionine synthase (401 aa).

137 to 142 (GQGSGD) is an ATP binding site.

It belongs to the AdoMet synthase 2 family. Requires Mg(2+) as cofactor.

The enzyme catalyses L-methionine + ATP + H2O = S-adenosyl-L-methionine + phosphate + diphosphate. The protein operates within amino-acid biosynthesis; S-adenosyl-L-methionine biosynthesis; S-adenosyl-L-methionine from L-methionine: step 1/1. Catalyzes the formation of S-adenosylmethionine from methionine and ATP. This is S-adenosylmethionine synthase from Haloquadratum walsbyi (strain DSM 16790 / HBSQ001).